Consider the following 150-residue polypeptide: Cytochrome c oxidase subunit 5A, mitochondrial (150 aa).

A mitochondrion-targeting transit peptide spans 1-41 (MLGAALRRCAVAATTRAGPRGLLHSARTPGPAAAIQSVRCX). Positions 2-17 (LGAALRRCAVAATTRA) match the SIFI-degron motif. 2 positions are modified to N6-acetyllysine: Lys87 and Lys113. The residue at position 141 (Thr141) is a Phosphothreonine.

Belongs to the cytochrome c oxidase subunit 5A family. In terms of assembly, component of the cytochrome c oxidase (complex IV, CIV), a multisubunit enzyme composed of 14 subunits. The complex is composed of a catalytic core of 3 subunits MT-CO1, MT-CO2 and MT-CO3, encoded in the mitochondrial DNA, and 11 supernumerary subunits COX4I, COX5A, COX5B, COX6A, COX6B, COX6C, COX7A, COX7B, COX7C, COX8 and NDUFA4, which are encoded in the nuclear genome. The complex exists as a monomer or a dimer and forms supercomplexes (SCs) in the inner mitochondrial membrane with NADH-ubiquinone oxidoreductase (complex I, CI) and ubiquinol-cytochrome c oxidoreductase (cytochrome b-c1 complex, complex III, CIII), resulting in different assemblies (supercomplex SCI(1)III(2)IV(1) and megacomplex MCI(2)III(2)IV(2)). Interacts with AFG1L. Interacts with RAB5IF. Post-translationally, in response to mitochondrial stress, the precursor protein is ubiquitinated by the SIFI complex in the cytoplasm before mitochondrial import, leading to its degradation. Within the SIFI complex, UBR4 initiates ubiquitin chain that are further elongated or branched by KCMF1.

It localises to the mitochondrion inner membrane. The protein operates within energy metabolism; oxidative phosphorylation. Functionally, component of the cytochrome c oxidase, the last enzyme in the mitochondrial electron transport chain which drives oxidative phosphorylation. The respiratory chain contains 3 multisubunit complexes succinate dehydrogenase (complex II, CII), ubiquinol-cytochrome c oxidoreductase (cytochrome b-c1 complex, complex III, CIII) and cytochrome c oxidase (complex IV, CIV), that cooperate to transfer electrons derived from NADH and succinate to molecular oxygen, creating an electrochemical gradient over the inner membrane that drives transmembrane transport and the ATP synthase. Cytochrome c oxidase is the component of the respiratory chain that catalyzes the reduction of oxygen to water. Electrons originating from reduced cytochrome c in the intermembrane space (IMS) are transferred via the dinuclear copper A center (CU(A)) of subunit 2 and heme A of subunit 1 to the active site in subunit 1, a binuclear center (BNC) formed by heme A3 and copper B (CU(B)). The BNC reduces molecular oxygen to 2 water molecules using 4 electrons from cytochrome c in the IMS and 4 protons from the mitochondrial matrix. In Pan paniscus (Pygmy chimpanzee), this protein is Cytochrome c oxidase subunit 5A, mitochondrial (COX5A).